The sequence spans 296 residues: NAD kinase (296 aa).

The active-site Proton acceptor is the Asp-73. NAD(+)-binding positions include 73–74 (DG), Lys-78, 151–152 (NE), Arg-178, Asp-180, and 191–196 (TAHAMS).

It belongs to the NAD kinase family. A divalent metal cation serves as cofactor.

It localises to the cytoplasm. The catalysed reaction is NAD(+) + ATP = ADP + NADP(+) + H(+). Its function is as follows. Involved in the regulation of the intracellular balance of NAD and NADP, and is a key enzyme in the biosynthesis of NADP. Catalyzes specifically the phosphorylation on 2'-hydroxyl of the adenosine moiety of NAD to yield NADP. The protein is NAD kinase of Francisella tularensis subsp. novicida (strain U112).